The sequence spans 262 residues: Ankyrin repeat domain-containing protein 7 (262 aa).

ANK repeat units follow at residues 67–96, 100–129, 133–162, 166–195, and 199–228; these read KYRT…KINI, ENKS…DPNL, RYNT…DLEA, DGYT…DVNA, and YQRT…ELSC.

The sequence is that of Ankyrin repeat domain-containing protein 7 (ANKRD7) from Macaca fascicularis (Crab-eating macaque).